A 568-amino-acid polypeptide reads, in one-letter code: Arginine--tRNA ligase (568 aa).

Positions 129–139 (ANPTGPLHIGH) match the 'HIGH' region motif.

The protein belongs to the class-I aminoacyl-tRNA synthetase family. In terms of assembly, monomer.

The protein localises to the cytoplasm. The catalysed reaction is tRNA(Arg) + L-arginine + ATP = L-arginyl-tRNA(Arg) + AMP + diphosphate. The protein is Arginine--tRNA ligase of Wolbachia pipientis wMel.